Reading from the N-terminus, the 352-residue chain is Photosystem II D2 protein (352 aa).

At Thr2 the chain carries N-acetylthreonine. At Thr2 the chain carries Phosphothreonine. The chain crosses the membrane as a helical span at residues Thr40–Thr60. His117 provides a ligand contact to chlorophyll a. A helical membrane pass occupies residues Gly124–Pro140. Positions 129 and 142 each coordinate pheophytin a. Residues Val152–Ser165 form a helical membrane-spanning segment. Chlorophyll a is bound at residue His197. A helical membrane pass occupies residues Ala207–Asp227. His214 and Phe261 together coordinate a plastoquinone. His214 serves as a coordination point for Fe cation. His268 contacts Fe cation. Residues Gly278 to Arg294 form a helical membrane-spanning segment.

It belongs to the reaction center PufL/M/PsbA/D family. In terms of assembly, PSII is composed of 1 copy each of membrane proteins PsbA, PsbB, PsbC, PsbD, PsbE, PsbF, PsbH, PsbI, PsbJ, PsbK, PsbL, PsbM, PsbT, PsbX, PsbY, PsbZ, Psb30/Ycf12, at least 3 peripheral proteins of the oxygen-evolving complex and a large number of cofactors. It forms dimeric complexes. The D1/D2 heterodimer binds P680, chlorophylls that are the primary electron donor of PSII, and subsequent electron acceptors. It shares a non-heme iron and each subunit binds pheophytin, quinone, additional chlorophylls, carotenoids and lipids. There is also a Cl(-1) ion associated with D1 and D2, which is required for oxygen evolution. The PSII complex binds additional chlorophylls, carotenoids and specific lipids. is required as a cofactor.

It localises to the plastid. The protein localises to the chloroplast thylakoid membrane. It carries out the reaction 2 a plastoquinone + 4 hnu + 2 H2O = 2 a plastoquinol + O2. Its function is as follows. Photosystem II (PSII) is a light-driven water:plastoquinone oxidoreductase that uses light energy to abstract electrons from H(2)O, generating O(2) and a proton gradient subsequently used for ATP formation. It consists of a core antenna complex that captures photons, and an electron transfer chain that converts photonic excitation into a charge separation. The D1/D2 (PsbA/PsbD) reaction center heterodimer binds P680, the primary electron donor of PSII as well as several subsequent electron acceptors. D2 is needed for assembly of a stable PSII complex. The protein is Photosystem II D2 protein of Pleurastrum terricola (Filamentous green alga).